Consider the following 296-residue polypeptide: Phosphatidylglycerol--prolipoprotein diacylglyceryl transferase (296 aa).

The next 3 helical transmembrane spans lie at Leu-17–Gly-37, Met-59–Tyr-79, and Gly-97–Trp-117. Residue Arg-142 participates in a 1,2-diacyl-sn-glycero-3-phospho-(1'-sn-glycerol) binding. The next 2 helical transmembrane spans lie at Met-230 to Phe-250 and Leu-265 to Trp-285.

It belongs to the Lgt family.

Its subcellular location is the cell inner membrane. It carries out the reaction L-cysteinyl-[prolipoprotein] + a 1,2-diacyl-sn-glycero-3-phospho-(1'-sn-glycerol) = an S-1,2-diacyl-sn-glyceryl-L-cysteinyl-[prolipoprotein] + sn-glycerol 1-phosphate + H(+). The protein operates within protein modification; lipoprotein biosynthesis (diacylglyceryl transfer). In terms of biological role, catalyzes the transfer of the diacylglyceryl group from phosphatidylglycerol to the sulfhydryl group of the N-terminal cysteine of a prolipoprotein, the first step in the formation of mature lipoproteins. This is Phosphatidylglycerol--prolipoprotein diacylglyceryl transferase from Burkholderia pseudomallei (strain 668).